Consider the following 614-residue polypeptide: V-type proton ATPase catalytic subunit A isoform 1 (614 aa).

Residue 247 to 254 participates in ATP binding; the sequence is GAFGCGKT.

Belongs to the ATPase alpha/beta chains family. As to quaternary structure, V-ATPase is a heteromultimeric enzyme made up of two complexes: the ATP-hydrolytic V1 complex and the proton translocation V0 complex. The V1 complex consists of three catalytic AB heterodimers that form a heterohexamer, three peripheral stalks each consisting of EG heterodimers, one central rotor including subunits D and F, and the regulatory subunits C and H. The proton translocation complex V0 consists of the proton transport subunit a, a ring of proteolipid subunits c9c'', rotary subunit d, subunits e and f, and the accessory subunits VhaAC45 and ATP6AP2.

The catalysed reaction is ATP + H2O + 4 H(+)(in) = ADP + phosphate + 5 H(+)(out). With respect to regulation, ATP hydrolysis occurs at the interface between the nucleotide-binding domains of subunits A and B. ATP hydrolysis triggers a conformational change in the subunits D and F, which induces a shift of subunit d. The c-ring is subsequently rotated and results in a continuous proton translocation across the membrane. Functionally, catalytic subunit of the V1 complex of vacuolar(H+)-ATPase (V-ATPase), a multisubunit enzyme composed of a peripheral complex (V1) that hydrolyzes ATP and a membrane integral complex (V0) that translocates protons. V-ATPase is responsible for acidifying and maintaining the pH of intracellular compartments and in some cell types, is targeted to the plasma membrane, where it is responsible for acidifying the extracellular environment. The sequence is that of V-type proton ATPase catalytic subunit A isoform 1 (Vha68-1) from Drosophila melanogaster (Fruit fly).